A 514-amino-acid polypeptide reads, in one-letter code: Membrane-bound lytic murein transglycosylase F (514 aa).

The signal sequence occupies residues 1–30 (MKKLKINYLFIGILTLLLAAALWPSIPWFG). A non-LT domain region spans residues 31 to 269 (KTENHIAAIQ…RIEEKYLGHG (239 aa)). The LT domain stretch occupies residues 270–514 (DDFDYVDTRS…LFTPQKKEEK (245 aa)). E314 is an active-site residue.

This sequence in the N-terminal section; belongs to the bacterial solute-binding protein 3 family. The protein in the C-terminal section; belongs to the transglycosylase Slt family.

The protein localises to the cell outer membrane. The enzyme catalyses Exolytic cleavage of the (1-&gt;4)-beta-glycosidic linkage between N-acetylmuramic acid (MurNAc) and N-acetylglucosamine (GlcNAc) residues in peptidoglycan, from either the reducing or the non-reducing ends of the peptidoglycan chains, with concomitant formation of a 1,6-anhydrobond in the MurNAc residue.. Its function is as follows. Murein-degrading enzyme that degrades murein glycan strands and insoluble, high-molecular weight murein sacculi, with the concomitant formation of a 1,6-anhydromuramoyl product. Lytic transglycosylases (LTs) play an integral role in the metabolism of the peptidoglycan (PG) sacculus. Their lytic action creates space within the PG sacculus to allow for its expansion as well as for the insertion of various structures such as secretion systems and flagella. The chain is Membrane-bound lytic murein transglycosylase F from Salmonella paratyphi B (strain ATCC BAA-1250 / SPB7).